Consider the following 168-residue polypeptide: MRYFYDTEFIEDGHTIELISIGVVAEDGREYYAVSTEFDPERAGSWVRTHVLPKLPPPASQLWRSRQQIRLDLEEFLRIDGTDSIELWAWVGAYDHVALCQLWGPMTALPPTVPRFTRELRQLWEDRGCPRMPPRPRDVHDALVDARDQLRRFRLITSTDDAGRGAAR.

Asp-6 provides a ligand contact to Mg(2+). The RNA binding stretch occupies residues 6 to 9; sequence DTEF.

As to quaternary structure, homodimer. Requires Mg(2+) as cofactor.

In terms of biological role, exonuclease that cleaves single-stranded 3' overhangs of double-stranded RNA. The polypeptide is 3'-5' exoribonuclease MT2234.1 (Mycobacterium tuberculosis (strain CDC 1551 / Oshkosh)).